Consider the following 40-residue polypeptide: Sulfur globule protein TR2 (40 aa).

To C.vinosum CV3. In terms of assembly, the protein envelope of the sulfur globules is composed of the three different proteins TR0, TR1 and TR2.

Functionally, structural protein of the sulfur globules, which are intracellular globules that serve for sulfur storage in purple sulfur bacteria. The polypeptide is Sulfur globule protein TR2 (Thiocapsa roseopersicina).